The primary structure comprises 2295 residues: Protein DOP1B (2295 aa).

Phosphoserine is present on residues serine 556 and serine 597. 4 disordered regions span residues 574–599 (AGDEEPSFPPLKSEDSGIGLSASSPE), 651–684 (GEENKPEEPPGKGNKGQTQSTEHPGRKSSWDPKP), 1034–1059 (CKEACGESEPQEGAPEERLPRGQFTT), and 1092–1136 (DLPD…LQDL). Residues 1111–1131 (ADTSSGHTDSENTSTFSSPSH) are compositionally biased toward polar residues. A Phosphoserine modification is found at serine 1167.

This sequence belongs to the DOP1 family. Homooligomer. Heterotrimer with ATP9A and MON2; this interaction is retromer-independent. Interacts with SNX3. As to expression, expressed in liver, heart and brain.

The protein localises to the early endosome membrane. It localises to the golgi apparatus membrane. May play a role in regulating membrane trafficking of cargo proteins. Together with ATP9A and MON2, regulates SNX3 retromer-mediated endosomal sorting of WLS away from lysosomal degradation. The sequence is that of Protein DOP1B (Dop1b) from Mus musculus (Mouse).